A 136-amino-acid polypeptide reads, in one-letter code: Acidic phospholipase A2 CC-PLA2-2 (136 aa).

The first 16 residues, 1–16, serve as a signal peptide directing secretion; that stretch reads MRTLWIVAVWLMGVEG. 7 disulfide bridges follow: Cys-42–Cys-129, Cys-44–Cys-60, Cys-59–Cys-109, Cys-65–Cys-136, Cys-66–Cys-102, Cys-73–Cys-95, and Cys-90–Cys-100. Ca(2+) contacts are provided by Tyr-43, Gly-45, and Gly-47. The active site involves His-63. Residue Asp-64 participates in Ca(2+) binding. The active site involves Asp-103.

Belongs to the phospholipase A2 family. Group II subfamily. D49 sub-subfamily. Ca(2+) is required as a cofactor. Post-translationally, glycosylated (2.5%). As to expression, expressed by the venom gland.

The protein localises to the secreted. The catalysed reaction is a 1,2-diacyl-sn-glycero-3-phosphocholine + H2O = a 1-acyl-sn-glycero-3-phosphocholine + a fatty acid + H(+). In terms of biological role, snake venom phospholipase A2 that inhibits blood coagulation and platelet aggregation induced by ADP and arachidonic acid. Inhibits tumor cell adhesion and migration in a dose-dependent manner. Abolishes the attachment of human brain microvascular endothelial cells (HBMEC) to fibrinogen (IC(50)=0.2 uM) and dramatically reduces its adhesion to fibronectin (IC(50)=0.3 uM), whereas no effect is observed on type I collagen, vitronectin or laminin 1. Also blocks the cell migration toward fibronectin and fibrinogen. These effects are not dependent of the catalytic activity, but are mediated by alpha-5/beta-1 (ITGA5/ITGB1) and alpha-v-containing (ITGAV) integrins. Also shows anti-angiogenic activity in chicken chorioallantoix membrane assay. Has a relatively high enzymatic activity. PLA2 catalyzes the calcium-dependent hydrolysis of the 2-acyl groups in 3-sn-phosphoglycerides. The protein is Acidic phospholipase A2 CC-PLA2-2 of Cerastes cerastes (Horned desert viper).